A 168-amino-acid polypeptide reads, in one-letter code: RNA pyrophosphohydrolase (168 aa).

One can recognise a Nudix hydrolase domain in the interval 8-159 (PYRTCVGVML…KRPVYERVVK (152 aa)). Residues 47 to 68 (GGVDPGEDTWKAAKRELYEETS) carry the Nudix box motif.

This sequence belongs to the Nudix hydrolase family. RppH subfamily. It depends on a divalent metal cation as a cofactor.

Accelerates the degradation of transcripts by removing pyrophosphate from the 5'-end of triphosphorylated RNA, leading to a more labile monophosphorylated state that can stimulate subsequent ribonuclease cleavage. The chain is RNA pyrophosphohydrolase from Rhodopseudomonas palustris (strain ATCC BAA-98 / CGA009).